The chain runs to 556 residues: Olefin beta-lactone synthetase (556 aa).

ATP contacts are provided by residues 187–195 (TSGSTGVPK), 321–326 (TPYGAT), D430, and R445.

Belongs to the ATP-dependent AMP-binding enzyme family. In terms of assembly, monomer. Forms a complex with OleB and OleD.

The protein resides in the cytoplasm. It carries out the reaction a (2R,3S)-2-alkyl-3-hydroxyalkanoate + ATP = a cis-3-alkyl-4-alkyloxetan-2-one + AMP + diphosphate. Its function is as follows. Involved in olefin biosynthesis. Catalyzes the conversion of 2-alkyl-3-hydroxyalkanoic acids to beta-lactones in the presence of ATP. The protein is Olefin beta-lactone synthetase of Xanthomonas campestris pv. campestris (strain ATCC 33913 / DSM 3586 / NCPPB 528 / LMG 568 / P 25).